The primary structure comprises 434 residues: Nicotinate phosphoribosyltransferase (434 aa).

His242 carries the phosphohistidine; by autocatalysis modification.

It belongs to the NAPRTase family. Post-translationally, transiently phosphorylated on a His residue during the reaction cycle. Phosphorylation strongly increases the affinity for substrates and increases the rate of nicotinate D-ribonucleotide production. Dephosphorylation regenerates the low-affinity form of the enzyme, leading to product release.

It carries out the reaction nicotinate + 5-phospho-alpha-D-ribose 1-diphosphate + ATP + H2O = nicotinate beta-D-ribonucleotide + ADP + phosphate + diphosphate. The protein operates within cofactor biosynthesis; NAD(+) biosynthesis; nicotinate D-ribonucleotide from nicotinate: step 1/1. In terms of biological role, catalyzes the synthesis of beta-nicotinate D-ribonucleotide from nicotinate and 5-phospho-D-ribose 1-phosphate at the expense of ATP. The chain is Nicotinate phosphoribosyltransferase from Bradyrhizobium sp. (strain BTAi1 / ATCC BAA-1182).